Here is a 253-residue protein sequence, read N- to C-terminus: MLAKRIIPCLDVKDGRVVKGINFVNLKDAGDPVEIAERYNELGADELVFLDITASYEKRKIMIDVVKRTSEKVFIPLTVGGGISDIDDIREVLKAGADKVSINTQAVKQPTLIRQAALRFGSQCVVVAIDAKKRPDGTGYNVYINGGRINTGLDAVEWAKKVKDLGAGEILLTSMDKDGTKDGYDIELTRLISEAVSIPVIASGGAGKPEHFKEVFTQGKADAALAASVFHYGELDIKELKRYLKDEGIPVRL.

Catalysis depends on residues aspartate 11 and aspartate 130.

The protein belongs to the HisA/HisF family. In terms of assembly, heterodimer of HisH and HisF.

It localises to the cytoplasm. It catalyses the reaction 5-[(5-phospho-1-deoxy-D-ribulos-1-ylimino)methylamino]-1-(5-phospho-beta-D-ribosyl)imidazole-4-carboxamide + L-glutamine = D-erythro-1-(imidazol-4-yl)glycerol 3-phosphate + 5-amino-1-(5-phospho-beta-D-ribosyl)imidazole-4-carboxamide + L-glutamate + H(+). It participates in amino-acid biosynthesis; L-histidine biosynthesis; L-histidine from 5-phospho-alpha-D-ribose 1-diphosphate: step 5/9. Its function is as follows. IGPS catalyzes the conversion of PRFAR and glutamine to IGP, AICAR and glutamate. The HisF subunit catalyzes the cyclization activity that produces IGP and AICAR from PRFAR using the ammonia provided by the HisH subunit. This chain is Imidazole glycerol phosphate synthase subunit HisF, found in Caldanaerobacter subterraneus subsp. tengcongensis (strain DSM 15242 / JCM 11007 / NBRC 100824 / MB4) (Thermoanaerobacter tengcongensis).